The primary structure comprises 133 residues: Large ribosomal subunit protein eL32 (133 aa).

The protein belongs to the eukaryotic ribosomal protein eL32 family.

The protein is Large ribosomal subunit protein eL32 (rpl32) of Dictyostelium discoideum (Social amoeba).